A 74-amino-acid chain; its full sequence is Conotoxin Vc6.8 (74 aa).

The N-terminal stretch at 1 to 19 (MEKLTILLLVAAVLMSTQA) is a signal peptide. Residues 20–34 (LMQEQRQKAKINLFS) constitute a propeptide that is removed on maturation. 3 cysteine pairs are disulfide-bonded: Cys49–Cys62, Cys55–Cys66, and Cys61–Cys70.

The protein belongs to the conotoxin O2 superfamily. Expressed by the venom duct.

It localises to the secreted. Its function is as follows. Inhibits voltage-gated ion channels. This chain is Conotoxin Vc6.8, found in Conus victoriae (Queen Victoria cone).